Consider the following 1637-residue polypeptide: Serine/threonine-protein kinase Genghis Khan (1637 aa).

In terms of domain architecture, Protein kinase spans 100 to 369; sequence FDILKIIGRG…IQDFMDHPWF (270 aa). Residues 106-114 and Lys-129 each bind ATP; that span reads IGRGAFGEV. The active-site Proton acceptor is the Asp-224. The region spanning 370–440 is the AGC-kinase C-terminal domain; the sequence is VGIDWKNIRQ…SLTSSSTLDS (71 aa). Coiled coils occupy residues 473-587, 643-688, and 839-881; these read VDSV…EDAV, SEKL…LKYT, and DELS…DLQK. The interval 538–575 is disordered; the sequence is RNQKQKLSRQVRDKEEELDGAMQKNDSLRNELRKSDKT. Over residues 563–575 the composition is skewed to basic and acidic residues; that stretch reads DSLRNELRKSDKT. Residue Thr-895 is modified to Phosphothreonine. The tract at residues 952 to 971 is disordered; it reads NNKDHSSMKEASVSDLSREE. The Phorbol-ester/DAG-type zinc finger occupies 989–1039; it reads IHQFLVRTFSSPTKCNHCTSLMVGLTRQGVVCEICGFACHTICCQKVPTTC. Positions 1059–1177 constitute a PH domain; the sequence is GTAYEGYVKV…WVIALGELHR (119 aa). The CNH domain maps to 1203 to 1489; that stretch reads IRNALCSVII…LPLNNLGNVV (287 aa). One can recognise a CRIB domain in the interval 1546–1559; the sequence is ISAPTNFNHISHMG. Ser-1584 carries the post-translational modification Phosphoserine. The segment at 1611–1637 is disordered; that stretch reads DYGNDNIISRTPSPMASSFMDGLSNND. Polar residues predominate over residues 1616–1626; it reads NIISRTPSPMA.

This sequence belongs to the protein kinase superfamily. AGC Ser/Thr protein kinase family. DMPK subfamily. As to quaternary structure, interacts tightly with GTP-bound but not GDP-bound Cdc42.

The catalysed reaction is L-seryl-[protein] + ATP = O-phospho-L-seryl-[protein] + ADP + H(+). The enzyme catalyses L-threonyl-[protein] + ATP = O-phospho-L-threonyl-[protein] + ADP + H(+). Acts as a downstream effector for the regulation of actin polymerization by Cdc42. The sequence is that of Serine/threonine-protein kinase Genghis Khan (gek) from Drosophila melanogaster (Fruit fly).